The following is an 888-amino-acid chain: Tyrosine-protein kinase receptor UFO (888 aa).

A signal peptide spans 1 to 18; that stretch reads MGRVPLAWWLALCCWGCA. Residues 19 to 86 are interaction with GAS6; sequence AHKDTQTEAG…QTQVPLGEDW (68 aa). The Extracellular portion of the chain corresponds to 19-445; the sequence is AHKDTQTEAG…PPRAFSWPWW (427 aa). Ig-like C2-type domains are found at residues 30-122 and 133-216; these read PFVG…TFVS and PYFL…ATIT. Asn37 carries N-linked (GlcNAc...) asparagine glycosylation. A disulfide bridge connects residues Cys50 and Cys111. N-linked (GlcNAc...) asparagine glycans are attached at residues Asn151 and Asn192. Cys154 and Cys199 form a disulfide bridge. Fibronectin type-III domains lie at 221 to 325 and 330 to 422; these read RPHH…TTEG and PPEN…PWRP. N-linked (GlcNAc...) asparagine glycosylation is found at Asn333, Asn339, and Asn395. The helical transmembrane segment at 446 to 466 threads the bilayer; sequence YVLLGALVAAACVLILALFLV. Residues 467–888 are Cytoplasmic-facing; that stretch reads HRRKKETRYG…PAPPGQEDGA (422 aa). The Protein kinase domain occupies 530 to 801; the sequence is VALGKTLGEG…ELREDLENTL (272 aa). Residues 536-544 and Lys561 contribute to the ATP site; that span reads LGEGEFGAV. The active-site Proton acceptor is the Asp666. Tyr697, Tyr773, and Tyr815 each carry phosphotyrosine; by autocatalysis. Residues 820 to 846 form a disordered region; the sequence is EGGSHLEPRGAAGGADPPTQPDPKDSC. Position 860 is a phosphotyrosine; by autocatalysis (Tyr860). Residues 865 to 888 form a disordered region; it reads STAPGPTLSADRGCPAPPGQEDGA.

Belongs to the protein kinase superfamily. Tyr protein kinase family. AXL/UFO subfamily. Heterodimer and heterotetramer with ligand GAS6. Interacts with CBL, GRB2, LCK, NCK2, PIK3R1, PIK3R2, PIK3R3, PLCG1, SOCS1 and TNS2. Part of a complex including AXL, TNK2 and GRB2, in which GRB2 promotes AXL recruitment by TNK2. Monoubiquitinated upon GAS6-binding. A very small proportion of the receptor could be subjected to polyubiquitination in a very transient fashion. In terms of processing, phosphorylated at tyrosine residues by autocatalysis, which activates kinase activity. As to expression, in distinct substructures of a broad spectrum of developing tissues (in the late embryogenesis). In cells forming organ capsules as well as in connective tissue structures (in adult).

The protein localises to the cell membrane. It carries out the reaction L-tyrosyl-[protein] + ATP = O-phospho-L-tyrosyl-[protein] + ADP + H(+). Activated by GAS6-binding and subsequent autophosphorylation. Its function is as follows. Receptor tyrosine kinase that transduces signals from the extracellular matrix into the cytoplasm by binding growth factor GAS6 and which is thus regulating many physiological processes including cell survival, cell proliferation, migration and differentiation. Ligand binding at the cell surface induces dimerization and autophosphorylation of AXL. Following activation by ligand, AXL binds and induces tyrosine phosphorylation of PI3-kinase subunits PIK3R1, PIK3R2 and PIK3R3; but also GRB2, PLCG1, LCK and PTPN11. Other downstream substrate candidates for AXL are CBL, NCK2, SOCS1 and TNS2. Recruitment of GRB2 and phosphatidylinositol 3 kinase regulatory subunits by AXL leads to the downstream activation of the AKT kinase. GAS6/AXL signaling plays a role in various processes such as endothelial cell survival during acidification by preventing apoptosis, optimal cytokine signaling during human natural killer cell development, hepatic regeneration, gonadotropin-releasing hormone neuron survival and migration, platelet activation, or regulation of thrombotic responses. Also plays an important role in inhibition of Toll-like receptors (TLRs)-mediated innate immune response. In Mus musculus (Mouse), this protein is Tyrosine-protein kinase receptor UFO (Axl).